A 179-amino-acid chain; its full sequence is NADH-quinone oxidoreductase subunit B (179 aa).

4 residues coordinate [4Fe-4S] cluster: Cys-52, Cys-53, Cys-117, and Cys-147.

The protein belongs to the complex I 20 kDa subunit family. As to quaternary structure, NDH-1 is composed of 14 different subunits. Subunits NuoB, C, D, E, F, and G constitute the peripheral sector of the complex. The cofactor is [4Fe-4S] cluster.

Its subcellular location is the cell inner membrane. It carries out the reaction a quinone + NADH + 5 H(+)(in) = a quinol + NAD(+) + 4 H(+)(out). NDH-1 shuttles electrons from NADH, via FMN and iron-sulfur (Fe-S) centers, to quinones in the respiratory chain. The immediate electron acceptor for the enzyme in this species is believed to be ubiquinone. Couples the redox reaction to proton translocation (for every two electrons transferred, four hydrogen ions are translocated across the cytoplasmic membrane), and thus conserves the redox energy in a proton gradient. In Ehrlichia chaffeensis (strain ATCC CRL-10679 / Arkansas), this protein is NADH-quinone oxidoreductase subunit B.